A 523-amino-acid chain; its full sequence is Thiamine pathway transporter THI73 (523 aa).

Residues 1 to 79 lie on the Cytoplasmic side of the membrane; that stretch reads MKNMSQRSMD…LSPKVLRKVD (79 aa). The helical transmembrane segment at 80–100 threads the bilayer; the sequence is LFILPFLCCTYLLMFLDKALL. Over 101 to 118 the chain is Extracellular; that stretch reads NYAASMGIKDHLKGNEFS. Residues 119–139 traverse the membrane as a helical segment; it reads NLGTIFSAAYIFMEPVVTYLI. Topologically, residues 140–141 are cytoplasmic; that stretch reads QK. A helical transmembrane segment spans residues 142–162; it reads FPISKILGTFITVWGIVLACH. Residues 163–176 lie on the Extracellular side of the membrane; it reads AACKTYASLMVVRT. A helical membrane pass occupies residues 177–197; that stretch reads LLGLFESSSAVGCIAISGMYY. Topologically, residues 198 to 207 are cytoplasmic; it reads TKSEQSARIG. The chain crosses the membrane as a helical span at residues 208–228; the sequence is FWATQAGTGYIVGGLISFGFL. Residues 229-239 lie on the Extracellular side of the membrane; that stretch reads HYHGTAFTSWQ. The chain crosses the membrane as a helical span at residues 240 to 260; it reads IMFLVVGLVTVAFGVLTFLYL. The Cytoplasmic segment spans residues 261-312; that stretch reads PDNVTNAWFLNKEEKIQVVEHIRANQTGLETKKFKKQQVKELFLHDKFTWPM. A helical transmembrane segment spans residues 313–333; the sequence is LLLTACSQISTGAIGTFSVTI. Topologically, residues 334 to 345 are extracellular; sequence TGTFGFDKYETA. The helical transmembrane segment at 346–366 threads the bilayer; it reads LLQLPIGAITAMIILITTQML. The Cytoplasmic portion of the chain corresponds to 367–371; sequence SRWGH. A helical membrane pass occupies residues 372 to 392; the sequence is ITLITTSMYIPAIIGCIVLIS. Residues 393 to 400 lie on the Extracellular side of the membrane; that stretch reads LPLSHKIG. The chain crosses the membrane as a helical span at residues 401 to 421; sequence NLFSLYLLYSGSCVITNIYIW. The Cytoplasmic portion of the chain corresponds to 422–432; it reads NSCNTSGYTKR. Residues 433–452 form a helical membrane-spanning segment; the sequence is VFRNAITMIVYNVSCIIAPQ. Over 453–466 the chain is Extracellular; sequence MFRAYSAPRYIPAK. Residues 467–487 traverse the membrane as a helical segment; sequence IALLVTQCVCVPLQLYIGYIC. The Cytoplasmic portion of the chain corresponds to 488-523; the sequence is KKENEKRDKEQEGQERKKYQFLDLTDIENRNFRYIY.

This sequence belongs to the major facilitator superfamily. Allantoate permease family.

The protein localises to the endoplasmic reticulum membrane. Its subcellular location is the cell membrane. Its function is as follows. Transports either thiamine or, rather, a related metabolite involved in the thiamine biosynthesis pathway. The chain is Thiamine pathway transporter THI73 (THI73) from Saccharomyces cerevisiae (strain ATCC 204508 / S288c) (Baker's yeast).